The chain runs to 990 residues: Translation initiation factor IF-2 (990 aa).

Positions 92–402 are disordered; the sequence is KKRTFVKRDD…QRDEHLQAAP (311 aa). Low complexity-rich tracts occupy residues 104–116 and 131–151; these read EGAADGAGSAAFA and EAPAEQAQADAAPAADGAAPA. Over residues 158 to 201 the composition is skewed to basic and acidic residues; that stretch reads ELARREEQARHQAELIRRQEAELAAKRAAREAREKREREAEERA. Residues 223–243 show a composition bias toward low complexity; that stretch reads TREQAAEATARNAAQLQARAK. The span at 244 to 264 shows a compositional bias: basic and acidic residues; it reads AAAESKARSDEEAARAADLDA. Composition is skewed to low complexity over residues 281–290 and 318–342; these read ATPKKAVMVA and PAVGATRTAAGAARAGAAAGAPGAG. Composition is skewed to basic and acidic residues over residues 358–368 and 386–398; these read PAKKKEIKTRG and RRGDSRDQRDEHL. The region spanning 490–659 is the tr-type G domain; it reads PRAPVVTVMG…LLQADVMELK (170 aa). A G1 region spans residues 499-506; the sequence is GHVDHGKT. Residue 499–506 participates in GTP binding; the sequence is GHVDHGKT. Positions 524-528 are G2; the sequence is GITQH. Positions 545-548 are G3; that stretch reads DTPG. Residues 545–549 and 599–602 each bind GTP; these read DTPGH and TKAD. Residues 599–602 form a G4 region; that stretch reads TKAD. The tract at residues 635-637 is G5; the sequence is SSK.

This sequence belongs to the TRAFAC class translation factor GTPase superfamily. Classic translation factor GTPase family. IF-2 subfamily.

Its subcellular location is the cytoplasm. In terms of biological role, one of the essential components for the initiation of protein synthesis. Protects formylmethionyl-tRNA from spontaneous hydrolysis and promotes its binding to the 30S ribosomal subunits. Also involved in the hydrolysis of GTP during the formation of the 70S ribosomal complex. This Verminephrobacter eiseniae (strain EF01-2) protein is Translation initiation factor IF-2.